Here is a 563-residue protein sequence, read N- to C-terminus: Merozoite receptor PK66 (563 aa).

The first 13 residues, 1–13 (MNKIYYILFLSAQ), serve as a signal peptide directing secretion. Residues 14–487 (CLVHMGKCER…DGKHKKKMLL (474 aa)) lie on the Extracellular side of the membrane. N-linked (GlcNAc...) asparagine glycans are attached at residues N36, N107, N176, N189, N238, and N441. A helical transmembrane segment spans residues 488–508 (IIIGVTGAVCVVAVASLFYFR). Residues 509-563 (KKAQDDKYDKMDQAEAYGKTANTRKDEMLDPEASFWGEDKRASHTTPVLMEKPYY) lie on the Cytoplasmic side of the membrane.

It belongs to the apicomplexan parasites AMA1 family.

It is found in the membrane. Merozoite receptor PK66 is a surface antigen involved in parasite invasion of erythrocytes. This Plasmodium knowlesi (strain nuri) protein is Merozoite receptor PK66 (PK66).